A 276-amino-acid chain; its full sequence is Energy-coupling factor transporter ATP-binding protein EcfA2 (276 aa).

The ABC transporter domain maps to 1 to 233 (MKTPFERLAL…GEEMAGWGLD (233 aa)). 27–34 (GHTGSGKS) serves as a coordination point for ATP. Glutamate 158 functions as the Proton acceptor in the catalytic mechanism.

It belongs to the ABC transporter superfamily. Energy-coupling factor EcfA family. Forms a stable energy-coupling factor (ECF) transporter complex composed of 2 membrane-embedded substrate-binding proteins (S component), 2 ATP-binding proteins (A component) and 2 transmembrane proteins (T component).

The protein localises to the cell membrane. Its function is as follows. ATP-binding (A) component of a common energy-coupling factor (ECF) ABC-transporter complex. Unlike classic ABC transporters this ECF transporter provides the energy necessary to transport a number of different substrates. This Bacillus subtilis (strain 168) protein is Energy-coupling factor transporter ATP-binding protein EcfA2.